Here is a 388-residue protein sequence, read N- to C-terminus: MAQRDYYDVLGVDKNASESDINKAYRKLAKKYHPDLNHEPGAEEKYKEVNEAYEVLHDKQKKAQYDQFGQAGVNGQAGFGGQGYGGFGGQGGYSSQGFGDFGDIFGDIFGSAFGGGRSRVDPTAPQKGQDLDYTMTIDFMDAIKGKKTDITYTRSEVCPTCDGSGAEKGTHPITCDKCHGTGVMTVTRQTPLGVIQQQTTCDKCGGRGTIIKHPCQTCHGKGTIDKKQTLEVKVPAGIDNGQQIRLSGQGEAGKNGGPYGDLYIVFRVKPSKEFRRNGTTIYSEAPISFAQAALGDKIRVNTVHGPVDLTIPAGTQPNTNFKLRGQGVPKINGTGNGDQEVTVKVVIPKKINDKQKEALVDYVKAGGGNISPQEKNFFERLKDKLNGE.

The 65-residue stretch at aspartate 5–glycine 69 folds into the J domain. The CR-type zinc finger occupies glycine 145–lysine 227. Residues cysteine 158, cysteine 161, cysteine 175, cysteine 178, cysteine 201, cysteine 204, cysteine 215, and cysteine 218 each contribute to the Zn(2+) site. 4 CXXCXGXG motif repeats span residues cysteine 158–glycine 165, cysteine 175–glycine 182, cysteine 201–glycine 208, and cysteine 215–glycine 222.

Belongs to the DnaJ family. In terms of assembly, homodimer. The cofactor is Zn(2+).

It localises to the cytoplasm. Functionally, participates actively in the response to hyperosmotic and heat shock by preventing the aggregation of stress-denatured proteins and by disaggregating proteins, also in an autonomous, DnaK-independent fashion. Unfolded proteins bind initially to DnaJ; upon interaction with the DnaJ-bound protein, DnaK hydrolyzes its bound ATP, resulting in the formation of a stable complex. GrpE releases ADP from DnaK; ATP binding to DnaK triggers the release of the substrate protein, thus completing the reaction cycle. Several rounds of ATP-dependent interactions between DnaJ, DnaK and GrpE are required for fully efficient folding. Also involved, together with DnaK and GrpE, in the DNA replication of plasmids through activation of initiation proteins. The protein is Chaperone protein DnaJ of Lactobacillus gasseri (strain ATCC 33323 / DSM 20243 / BCRC 14619 / CIP 102991 / JCM 1131 / KCTC 3163 / NCIMB 11718 / NCTC 13722 / AM63).